The primary structure comprises 407 residues: 1-deoxy-D-xylulose 5-phosphate reductoisomerase (407 aa).

Threonine 25, glycine 26, serine 27, isoleucine 28, asparagine 53, and asparagine 136 together coordinate NADPH. Lysine 137 provides a ligand contact to 1-deoxy-D-xylulose 5-phosphate. Residue glutamate 138 participates in NADPH binding. Aspartate 162 serves as a coordination point for Mn(2+). 1-deoxy-D-xylulose 5-phosphate contacts are provided by serine 163, glutamate 164, serine 188, and histidine 211. Residue glutamate 164 participates in Mn(2+) binding. NADPH is bound at residue glycine 217. 1-deoxy-D-xylulose 5-phosphate contacts are provided by serine 224, asparagine 229, lysine 230, and glutamate 233. Residue glutamate 233 coordinates Mn(2+).

It belongs to the DXR family. Mg(2+) is required as a cofactor. It depends on Mn(2+) as a cofactor.

It carries out the reaction 2-C-methyl-D-erythritol 4-phosphate + NADP(+) = 1-deoxy-D-xylulose 5-phosphate + NADPH + H(+). The protein operates within isoprenoid biosynthesis; isopentenyl diphosphate biosynthesis via DXP pathway; isopentenyl diphosphate from 1-deoxy-D-xylulose 5-phosphate: step 1/6. In terms of biological role, catalyzes the NADPH-dependent rearrangement and reduction of 1-deoxy-D-xylulose-5-phosphate (DXP) to 2-C-methyl-D-erythritol 4-phosphate (MEP). The polypeptide is 1-deoxy-D-xylulose 5-phosphate reductoisomerase (Rhodopseudomonas palustris (strain HaA2)).